A 130-amino-acid polypeptide reads, in one-letter code: MTTSSYFLLVALGLLLYVRQSFSTHEHTCQLDDPAHPQGKCGSDLVNYHEEKCEEEEARRGGTNDGGKKRRRASPLWKRRRFLSMLKARAKRTGYKGIACECCQHYCTDQEFINYCPPVTESSSSSSSAA.

The N-terminal stretch at 1-24 is a signal peptide; the sequence is MTTSSYFLLVALGLLLYVRQSFST. 4 cysteine pairs are disulfide-bonded: cysteine 29/cysteine 100, cysteine 41/cysteine 103, cysteine 53/cysteine 116, and cysteine 102/cysteine 107. Proline 34 is modified (4-hydroxyproline; partial). Residues 54 to 74 are disordered; the sequence is EEEEARRGGTNDGGKKRRRAS. The propeptide at 59 to 92 is c peptide; it reads RRGGTNDGGKKRRRASPLWKRRRFLSMLKARAKR. Residue glutamate 111 is modified to 4-carboxyglutamate; partial.

It belongs to the insulin family. In terms of assembly, heterodimer of A and B chains; disulfide-linked. As to expression, expressed by the venom gland.

Its subcellular location is the secreted. In terms of biological role, this venom insulin, from a fish-hunting cone snail, facilitates prey capture by rapidly inducing hypoglycemic shock. Intraperitoneal injection of this peptide into zebrafish lowers blood glucose with the same potency than human insulin. In vivo, when applied to water, this peptide reduces overall locomotor activity of zebrafish larvae, observed as a significant decrease in the percentage of time spent swimming and movement frequency. In Conus geographus (Geography cone), this protein is Con-Ins G2.